Consider the following 818-residue polypeptide: Probable helicase MAGATAMA 3 (818 aa).

A UvrD-like helicase ATP-binding domain is found at 259–559 (NKSQKEAIDV…KMLKTQYRMH (301 aa)). 280–287 (GPPGTGKT) provides a ligand contact to ATP. Acidic residues-rich tracts occupy residues 781-790 (PDAPLYEDES) and 798-818 (GDDD…AGED). Positions 781 to 818 (PDAPLYEDESLPVAPYGGDDDFGDGDADQDDVAMAGED) are disordered.

It belongs to the helicase family. As to expression, expressed in flowers, siliques, leaves, roots and shoot apex.

It is found in the nucleus. In terms of biological role, probable helicase that may regulate RNA molecules involved in nucleolar organization and pollen tube guidance. This is Probable helicase MAGATAMA 3 (MAA3) from Arabidopsis thaliana (Mouse-ear cress).